The primary structure comprises 235 residues: Carbohydrate deacetylase (235 aa).

Residues His61 and His124 each coordinate Mg(2+).

Belongs to the YdjC deacetylase family. It depends on Mg(2+) as a cofactor.

Its function is as follows. Probably catalyzes the deacetylation of acetylated carbohydrates an important step in the degradation of oligosaccharides. The sequence is that of Carbohydrate deacetylase from Bacillus cereus (strain 03BB102).